We begin with the raw amino-acid sequence, 1096 residues long: Lysine-specific demethylase PHF2 (1096 aa).

A PHD-type zinc finger spans residues 5-56; it reads PVYCVCRLPYDVTRFMIECDACKDWFHGSCVGVEEEEAPDIDIYHCPNCEKT. The 2-oxoglutarate site is built by threonine 193 and threonine 246. A JmjC domain is found at 197–353; the sequence is FSDTRMSSFV…MQMRAYEVER (157 aa). Fe cation-binding residues include histidine 249 and aspartate 251. 2-oxoglutarate is bound by residues tyrosine 259 and lysine 266. Residue tyrosine 321 coordinates Fe cation. Threonine 323 lines the 2-oxoglutarate pocket. A disordered region spans residues 448 to 630; that stretch reads TVRPEVNAAA…KSPLAGNKDK (183 aa). Serine 474 bears the Phosphoserine mark. Phosphothreonine is present on threonine 479. The segment covering 503-515 has biased composition (pro residues); sequence SKIPKPPKSPKPP. Serine 536 is subject to Phosphoserine. 2 stretches are compositionally biased toward basic and acidic residues: residues 545-560 and 575-630; these read LEAHTKEALTKMEPPK and DTVH…NKDK. Phosphoserine occurs at positions 651, 677, and 701. Residue lysine 707 forms a Glycyl lysine isopeptide (Lys-Gly) (interchain with G-Cter in SUMO2) linkage. Lysine 716 carries the post-translational modification N6-acetyllysine. Disordered regions lie at residues 719-755, 811-841, and 871-1080; these read LDSAVYKSDDSSDEGSLHIDTDTKPGRNAKVKKESGS, WGTGQAKGGSLAAHGARKIGGGNKGTGKRLL, and YPSL…TAKQ. The residue at position 724 (tyrosine 724) is a Phosphotyrosine. Residues 725-753 are compositionally biased toward basic and acidic residues; that stretch reads KSDDSSDEGSLHIDTDTKPGRNAKVKKES. Serine 726, serine 729, serine 730, and serine 734 each carry phosphoserine. Phosphoserine occurs at positions 873, 876, and 893. Basic and acidic residues predominate over residues 910–919; sequence RQDRPVREGT. Residues 943-953 are compositionally biased toward basic residues; sequence NRKKKNTKRKP. Residues 954–1010 show a composition bias toward low complexity; the sequence is APNTASPSISTSASASTGTTSASTTPASTTPASTTPASTTPASTSTASSQASQEGSS. 2 stretches are compositionally biased toward polar residues: residues 1031–1040 and 1054–1065; these read GTFSGSQAGR and RRPSASSPNNTA. At serine 1057 the chain carries Phosphoserine; by PKA.

The protein belongs to the JHDM1 histone demethylase family. JHDM1D subfamily. In terms of assembly, component of the PHF2-ARID5B complex, at least composed of PHF2 and ARID5B. Interacts with HNF4A and NR1H4. Interacts with RELA. Phosphorylated by PKA on specific serine residues, leading to the formation of an active lysine demethylase complex.

It is found in the nucleus. It localises to the nucleolus. The protein localises to the chromosome. The protein resides in the centromere. Its subcellular location is the kinetochore. It catalyses the reaction N(6),N(6)-dimethyl-L-lysyl(9)-[histone H3] + 2-oxoglutarate + O2 = N(6)-methyl-L-lysyl(9)-[histone H3] + formaldehyde + succinate + CO2. Enzymatically inactive by itself, and become active following phosphorylation by PKA. Lysine demethylase that demethylates both histones and non-histone proteins. Enzymatically inactive by itself, and becomes active following phosphorylation by PKA: forms a complex with ARID5B and mediates demethylation of methylated ARID5B. Demethylation of ARID5B leads to target the PHF2-ARID5B complex to target promoters, where PHF2 mediates demethylation of dimethylated 'Lys-9' of histone H3 (H3K9me2), followed by transcription activation of target genes. The PHF2-ARID5B complex acts as a coactivator of HNF4A in liver. PHF2 is recruited to trimethylated 'Lys-4' of histone H3 (H3K4me3) at rDNA promoters and promotes expression of rDNA. Involved in the activation of toll-like receptor 4 (TLR4)-target inflammatory genes in macrophages by catalyzing the demethylation of trimethylated histone H4 lysine 20 (H4K20me3) at the gene promoters. The chain is Lysine-specific demethylase PHF2 (Phf2) from Mus musculus (Mouse).